The sequence spans 86 residues: Large ribosomal subunit protein eL43 (86 aa).

Residues Cys38, Cys41, Cys56, and Cys59 each coordinate Zn(2+). Residues 38-59 form a C4-type zinc finger; that stretch reads CPVCGRKAVRRISTGIWQCQKC.

The protein belongs to the eukaryotic ribosomal protein eL43 family. Part of the 50S ribosomal subunit. It depends on Zn(2+) as a cofactor.

This is Large ribosomal subunit protein eL43 from Thermococcus kodakarensis (strain ATCC BAA-918 / JCM 12380 / KOD1) (Pyrococcus kodakaraensis (strain KOD1)).